The following is a 299-amino-acid chain: Ornithine carbamoyltransferase (299 aa).

Carbamoyl phosphate-binding positions include 52-55 (STRT), glutamine 79, arginine 103, and 130-133 (HPCQ). Residues asparagine 161, aspartate 218, and 222-223 (SM) contribute to the L-ornithine site. Residues 258-259 (CL) and arginine 286 contribute to the carbamoyl phosphate site.

It belongs to the aspartate/ornithine carbamoyltransferase superfamily. OTCase family.

Its subcellular location is the cytoplasm. The enzyme catalyses carbamoyl phosphate + L-ornithine = L-citrulline + phosphate + H(+). It functions in the pathway amino-acid biosynthesis; L-arginine biosynthesis; L-arginine from L-ornithine and carbamoyl phosphate: step 1/3. Reversibly catalyzes the transfer of the carbamoyl group from carbamoyl phosphate (CP) to the N(epsilon) atom of ornithine (ORN) to produce L-citrulline. The polypeptide is Ornithine carbamoyltransferase (Ruthia magnifica subsp. Calyptogena magnifica).